A 234-amino-acid chain; its full sequence is Small ribosomal subunit protein uS3 (234 aa).

A KH type-2 domain is found at 17–86; that stretch reads VEKFLTKELK…SPQVEVQQVQ (70 aa).

Belongs to the universal ribosomal protein uS3 family. Part of the 30S ribosomal subunit.

In terms of biological role, binds the lower part of the 30S subunit head. This is Small ribosomal subunit protein uS3 from Methanoculleus marisnigri (strain ATCC 35101 / DSM 1498 / JR1).